The following is a 446-amino-acid chain: Enolase (446 aa).

His-164 and Glu-173 together coordinate substrate. The Proton donor role is filled by Glu-216. Asp-251, Glu-302, and Asp-329 together coordinate Mg(2+). Positions 302 and 329 each coordinate substrate. Catalysis depends on Lys-354, which acts as the Proton acceptor. Residues 381–384 (SHRS) and Lys-405 contribute to the substrate site.

Belongs to the enolase family. As to quaternary structure, homodimer. Requires Mg(2+) as cofactor.

The protein localises to the cytoplasm. The catalysed reaction is (2R)-2-phosphoglycerate = phosphoenolpyruvate + H2O. It functions in the pathway carbohydrate degradation; glycolysis; pyruvate from D-glyceraldehyde 3-phosphate: step 4/5. The polypeptide is Enolase (ENO1) (Oryza sativa subsp. japonica (Rice)).